The sequence spans 505 residues: Alkylglycerol monooxygenase (505 aa).

2 helical membrane passes run 56 to 76 (VSAW…ISGH) and 104 to 124 (AVAI…ELPW). Positions 130–262 (WIFCLFFQDF…FIIWDKMFNT (133 aa)) constitute a Fatty acid hydroxylase domain. The Histidine box-1 motif lies at 145-149 (HRAVH). The Histidine box-2 motif lies at 158–162 (HTIHH). The Histidine box-3 signature appears at 234 to 238 (HRVHH). 4 helical membrane passes run 366 to 386 (ILVK…FFHF), 396 to 416 (LDCT…GAFF), 430 to 450 (CCGV…AGTH), and 452 to 472 (LFVI…VLVE).

It belongs to the sterol desaturase family. TMEM195 subfamily. Fe cation is required as a cofactor.

The protein localises to the endoplasmic reticulum membrane. The catalysed reaction is 1-O-(1,2-saturated-alkyl)-sn-glycerol + (6R)-L-erythro-5,6,7,8-tetrahydrobiopterin + O2 = a 1-(1-hydroxyalkyl)-sn-glycerol + (6R)-L-erythro-6,7-dihydrobiopterin + H2O. Glyceryl-ether monooxygenase that cleaves the O-alkyl bond of ether lipids. This is Alkylglycerol monooxygenase from Caenorhabditis elegans.